Reading from the N-terminus, the 460-residue chain is Flavin-containing monooxygenase FMO GS-OX-like 9 (460 aa).

Residue 20 to 25 (GAGPAG) participates in FAD binding. 222–227 (GNSMSG) is a binding site for NADP(+).

Belongs to the FMO family. Requires FAD as cofactor.

Catalyzes the conversion of methylthioalkyl glucosinolates of any chain length into methylsulfinylalkyl glucosinolates. This Arabidopsis thaliana (Mouse-ear cress) protein is Flavin-containing monooxygenase FMO GS-OX-like 9.